The primary structure comprises 365 residues: 5-hydroxytryptamine receptor 1F (365 aa).

Residues 1–24 lie on the Extracellular side of the membrane; that stretch reads MDFLNSSDQNLTSEELLNRMPSKI. Residues N5 and N10 are each glycosylated (N-linked (GlcNAc...) asparagine). The chain crosses the membrane as a helical span at residues 25-49; the sequence is LVSLTLSGLALMTTTINSLVIAAII. Over 50-59 the chain is Cytoplasmic; that stretch reads VTRKLHHPAN. A helical transmembrane segment spans residues 60-81; that stretch reads YLICSLAVTDFLVAVLVMPFSI. Over 82–96 the chain is Extracellular; it reads VYIVRESWIMGQVVC. C96 and C172 are disulfide-bonded. A helical transmembrane segment spans residues 97 to 119; it reads DIWLSVDITCCTCSILHLSAIAL. Serotonin contacts are provided by D103 and C107. The short motif at 120 to 122 is the DRY motif; important for ligand-induced conformation changes element; the sequence is DRY. At 120–139 the chain is on the cytoplasmic side; the sequence is DRYRAITDAVEYARKRTPKH. Residues 140-159 form a helical membrane-spanning segment; that stretch reads AGIMITIVWIISVFISMPPL. The Extracellular segment spans residues 160–178; the sequence is FWRHQGTSRDDECIIKHDH. Residues 179 to 202 traverse the membrane as a helical segment; that stretch reads IVSTIYSTFGAFYIPLALILILYY. The Cytoplasmic portion of the chain corresponds to 203–291; the sequence is KIYRAAKTLY…KISGTRERKA (89 aa). Residues 292–315 traverse the membrane as a helical segment; sequence ATTLGLILGAFVICWLPFFVKELV. The Extracellular portion of the chain corresponds to 316-327; that stretch reads VNVCDKCKISEE. The helical transmembrane segment at 328-350 threads the bilayer; it reads MSNFLAWLGYLNSLINPLIYTIF. The short motif at 343–347 is the NPxxY motif; important for ligand-induced conformation changes and signaling element; that stretch reads NPLIY. The Cytoplasmic portion of the chain corresponds to 351–365; it reads NEDFKKAFQKLVRCR.

Belongs to the G-protein coupled receptor 1 family.

It is found in the cell membrane. Functionally, G-protein coupled receptor for 5-hydroxytryptamine (serotonin). Also functions as a receptor for various alkaloids and psychoactive substances. Ligand binding causes a conformation change that triggers signaling via guanine nucleotide-binding proteins (G proteins) and modulates the activity of downstream effectors, such as adenylate cyclase. HTR1F is coupled to G(i)/G(o) G alpha proteins and mediates inhibitory neurotransmission by inhibiting adenylate cyclase activity. The chain is 5-hydroxytryptamine receptor 1F (HTR1F) from Pan troglodytes (Chimpanzee).